Here is a 126-residue protein sequence, read N- to C-terminus: RutC family protein PH0854 (126 aa).

The protein belongs to the RutC family.

The polypeptide is RutC family protein PH0854 (Pyrococcus horikoshii (strain ATCC 700860 / DSM 12428 / JCM 9974 / NBRC 100139 / OT-3)).